Here is a 432-residue protein sequence, read N- to C-terminus: MGKNVVVLGTQWGDEGKGKVVDLLTERAKYVVRYQGGHNAGHTLVINGEKTVLHLIPSGILRENVVSIIANGVVLSPEALMKEMGELEARGIPVRERMLISEACPLILAYHVAMDVAREKARGAKAIGTTGRGIGPAYEDKVARRALRVGDLFNKDTFATKLKEVVDYYNFQLVHYYQADTVDYQMVLDDILAVAYVLTGMVVDVSELLDSARKRGDLMMFEGAQGTLLDIDHGTYPYVTSSNTTAGGVATGSGLGPRYVDYVLGIVKAYSTRVGAGPFPTELFDDTGEFLCVKGNEFGATTGRRRRTGWLDAVAVRRAVQINSLSGFCLTKLDVLDGLQEVKICTAYRLPDGRVVESTPLAAENWEGIEPIYESMPGWSESTFGVKAFDKLPEAARRYIKRIEEVTGVPVDIVSTGPDRSETMILRDPFDA.

GTP contacts are provided by residues 13–19 (GDEGKGK) and 41–43 (GHT). Asp14 serves as the catalytic Proton acceptor. Mg(2+) is bound by residues Asp14 and Gly41. IMP is bound by residues 14–17 (DEGK), 39–42 (NAGH), Thr130, Arg144, Gln225, Thr240, and Arg304. His42 (proton donor) is an active-site residue. Substrate is bound at residue 300 to 306 (ATTGRRR). GTP contacts are provided by residues Arg306, 332-334 (KLD), and 415-417 (STG).

It belongs to the adenylosuccinate synthetase family. Homodimer. The cofactor is Mg(2+).

It localises to the cytoplasm. It catalyses the reaction IMP + L-aspartate + GTP = N(6)-(1,2-dicarboxyethyl)-AMP + GDP + phosphate + 2 H(+). It functions in the pathway purine metabolism; AMP biosynthesis via de novo pathway; AMP from IMP: step 1/2. Functionally, plays an important role in the de novo pathway of purine nucleotide biosynthesis. Catalyzes the first committed step in the biosynthesis of AMP from IMP. This Sodalis glossinidius (strain morsitans) protein is Adenylosuccinate synthetase.